Consider the following 888-residue polypeptide: Pyruvate dehydrogenase E1 component (888 aa).

Homodimer. Part of the PDH complex, consisting of multiple copies of pyruvate dehydrogenase (E1), dihydrolipoamide acetyltransferase (E2) and lipoamide dehydrogenase (E3). Thiamine diphosphate is required as a cofactor.

It carries out the reaction N(6)-[(R)-lipoyl]-L-lysyl-[protein] + pyruvate + H(+) = N(6)-[(R)-S(8)-acetyldihydrolipoyl]-L-lysyl-[protein] + CO2. Its function is as follows. Component of the pyruvate dehydrogenase (PDH) complex, that catalyzes the overall conversion of pyruvate to acetyl-CoA and CO(2). This chain is Pyruvate dehydrogenase E1 component (aceE), found in Buchnera aphidicola subsp. Schizaphis graminum (strain Sg).